The following is a 65-amino-acid chain: Large ribosomal subunit protein bL35 (65 aa).

It belongs to the bacterial ribosomal protein bL35 family.

The sequence is that of Large ribosomal subunit protein bL35 from Phytoplasma australiense.